The following is a 916-amino-acid chain: Bifunctional aspartokinase/homoserine dehydrogenase 2, chloroplastic (916 aa).

A chloroplast-targeting transit peptide spans 1-87; that stretch reads MATLKPSFTV…VDQVQIPKGE (87 aa). Residues 88–336 form an aspartokinase region; that stretch reads MWSVHKFGGT…VNEAVILQTL (249 aa). The interface stretch occupies residues 337 to 562; it reads SYQEAWEMSY…LSRTTLAMGI (226 aa). 2 consecutive ACT domains span residues 412–487 and 493–570; these read VEGT…VIPN and AVGQ…LIGA. The tract at residues 563–916 is homoserine dehydrogenase; sequence VGPGLIGATL…RLASYLGAPS (354 aa). Ile-568 provides a ligand contact to NAD(+). 4 residues coordinate NADP(+): Ile-568, Lys-600, Thr-649, and Lys-673. NADPH is bound at residue Ile-568. Thr-649 is an NAD(+) binding site. NADPH-binding residues include Thr-649 and Lys-673. Residues Glu-700, Val-703, Ala-705, and Leu-707 each contribute to the Na(+) site. NADP(+) contacts are provided by Gly-758 and Glu-761. Residues Glu-761 and Asp-772 each coordinate L-homoserine. Residue Lys-776 is the Proton donor of the active site. Gly-893 contacts NAD(+). NADP(+) is bound at residue Gly-893. Residue Gly-893 coordinates NADPH.

This sequence in the N-terminal section; belongs to the aspartokinase family. In the C-terminal section; belongs to the homoserine dehydrogenase family. As to quaternary structure, homo- or heterodimer. A metal cation serves as cofactor.

It localises to the plastid. Its subcellular location is the chloroplast. The enzyme catalyses L-homoserine + NADP(+) = L-aspartate 4-semialdehyde + NADPH + H(+). It catalyses the reaction L-homoserine + NAD(+) = L-aspartate 4-semialdehyde + NADH + H(+). The catalysed reaction is L-aspartate + ATP = 4-phospho-L-aspartate + ADP. It participates in amino-acid biosynthesis; L-lysine biosynthesis via DAP pathway; (S)-tetrahydrodipicolinate from L-aspartate: step 1/4. Its pathway is amino-acid biosynthesis; L-methionine biosynthesis via de novo pathway; L-homoserine from L-aspartate: step 1/3. It functions in the pathway amino-acid biosynthesis; L-methionine biosynthesis via de novo pathway; L-homoserine from L-aspartate: step 3/3. The protein operates within amino-acid biosynthesis; L-threonine biosynthesis; L-threonine from L-aspartate: step 1/5. It participates in amino-acid biosynthesis; L-threonine biosynthesis; L-threonine from L-aspartate: step 3/5. Threonine interaction with Gln-443 leads to inhibition of aspartate kinase activity and facilitates the binding of a second threonine on Gln-524, leading to a partial inhibition of homoserine dehydrogenase activity (25% of activity remaining at saturation with threonine). Homoserine dehydrogenase activity is also partially inhibited by cysteine (15% of activity remaining at saturation with cysteine). No synergy between threonine and cysteine for the inhibition. 13-fold activation of aspartate kinase activity by cysteine, isoleucine, valine, serine and alanine at 2.5 mM and 4-fold activation by leucine at 2.5 mM, but no activation of homoserine dehydrogenase activity. In terms of biological role, bifunctional aspartate kinase and homoserine dehydrogenase that catalyzes the first and the third steps toward the synthesis of lysine, methionine and threonine from aspartate. In Arabidopsis thaliana (Mouse-ear cress), this protein is Bifunctional aspartokinase/homoserine dehydrogenase 2, chloroplastic (AKHSDH2).